Here is a 341-residue protein sequence, read N- to C-terminus: Retinol dehydrogenase 10 (341 aa).

The chain crosses the membrane as a helical; Signal-anchor span at residues 3–23 (IVLEFFLVTFKVLWAFVLAAA). 40–64 (LITGAGSGLGRLFALEFARRRAQLV) is an NADP(+) binding site. S197 provides a ligand contact to substrate. Residue Y210 is the Proton acceptor of the active site.

It belongs to the short-chain dehydrogenases/reductases (SDR) family.

It is found in the microsome membrane. The protein resides in the endoplasmic reticulum membrane. The enzyme catalyses all-trans-retinol + NADP(+) = all-trans-retinal + NADPH + H(+). It participates in cofactor metabolism; retinol metabolism. Retinol dehydrogenase with a clear preference for NADP. Converts all-trans-retinol to all-trans-retinal. Has no detectable activity towards 11-cis-retinol, 9-cis-retinol and 13-cis-retinol. The chain is Retinol dehydrogenase 10 (rdh10) from Xenopus tropicalis (Western clawed frog).